The chain runs to 268 residues: GTP cyclohydrolase FolE2 (268 aa).

It belongs to the GTP cyclohydrolase IV family.

It carries out the reaction GTP + H2O = 7,8-dihydroneopterin 3'-triphosphate + formate + H(+). It participates in cofactor biosynthesis; 7,8-dihydroneopterin triphosphate biosynthesis; 7,8-dihydroneopterin triphosphate from GTP: step 1/1. Its function is as follows. Converts GTP to 7,8-dihydroneopterin triphosphate. The sequence is that of GTP cyclohydrolase FolE2 from Janthinobacterium sp. (strain Marseille) (Minibacterium massiliensis).